The following is a 160-amino-acid chain: MSLQKKPDLKDPVLRAKLAKGMGHNYYGEPAWPNDLLYTFPVCILGTIGCLVGLAVLEPTMFGEPANPFATPLEILPEWYFFPVFQILRVIPNKLLGVVLMAGVPAGLLTVPFIESINKFQNPFRRPVAMTVFLIGTVVAVWLGIGATLPIDTSLTLGFF.

The next 3 helical transmembrane spans lie at 36 to 56 (LLYTFPVCILGTIGCLVGLAV), 95 to 115 (LLGVVLMAGVPAGLLTVPFIE), and 131 to 151 (TVFLIGTVVAVWLGIGATLPI).

The protein belongs to the cytochrome b family. PetD subfamily. In terms of assembly, the 4 large subunits of the cytochrome b6-f complex are cytochrome b6, subunit IV (17 kDa polypeptide, petD), cytochrome f and the Rieske protein, while the 4 small subunits are petG, petL, petM and petN. The complex functions as a dimer.

It is found in the plastid. The protein localises to the chloroplast thylakoid membrane. Its function is as follows. Component of the cytochrome b6-f complex, which mediates electron transfer between photosystem II (PSII) and photosystem I (PSI), cyclic electron flow around PSI, and state transitions. The chain is Cytochrome b6-f complex subunit 4 from Mesostigma viride (Green alga).